A 514-amino-acid polypeptide reads, in one-letter code: Glutamyl-tRNA(Gln) amidotransferase subunit A (514 aa).

Residues Lys76 and Ser151 each act as charge relay system in the active site. Catalysis depends on Ser175, which acts as the Acyl-ester intermediate.

It belongs to the amidase family. GatA subfamily. As to quaternary structure, heterotrimer of A, B and C subunits.

The enzyme catalyses L-glutamyl-tRNA(Gln) + L-glutamine + ATP + H2O = L-glutaminyl-tRNA(Gln) + L-glutamate + ADP + phosphate + H(+). Its function is as follows. Allows the formation of correctly charged Gln-tRNA(Gln) through the transamidation of misacylated Glu-tRNA(Gln) in organisms which lack glutaminyl-tRNA synthetase. The reaction takes place in the presence of glutamine and ATP through an activated gamma-phospho-Glu-tRNA(Gln). The chain is Glutamyl-tRNA(Gln) amidotransferase subunit A from Salinibacter ruber (strain DSM 13855 / M31).